The primary structure comprises 370 residues: Protein DUF642 L-GALACTONO-1,4-LACTONE-RESPONSIVE GENE 1 (370 aa).

Residues 1 to 22 (MMYQEAALLLALLFISSNVVLS) form the signal peptide. N-linked (GlcNAc...) asparagine glycosylation occurs at Asn124.

Expressed at low levels in roots, seedlings and leaves.

It is found in the secreted. The protein localises to the cell wall. This is Protein DUF642 L-GALACTONO-1,4-LACTONE-RESPONSIVE GENE 1 from Arabidopsis thaliana (Mouse-ear cress).